Here is a 765-residue protein sequence, read N- to C-terminus: Dipeptidyl peptidase 4 (765 aa).

Residues 1–6 (MKTPWK) lie on the Cytoplasmic side of the membrane. Residues 7–29 (VLLGLLGLAALITIITVPVVLLN) traverse the membrane as a helical; Signal-anchor for type II membrane protein segment. The Extracellular portion of the chain corresponds to 30–765 (KGNDAAADSR…HFIKQCFSLP (736 aa)). 9 N-linked (GlcNAc...) asparagine glycosylation sites follow: Asn84, Asn91, Asn149, Asn178, Asn228, Asn280, Asn320, Asn330, and Asn331. Cystine bridges form between Cys384-Cys393, Cys443-Cys446, and Cys453-Cys471. Asn519 carries an N-linked (GlcNAc...) asparagine glycan. The active-site Charge relay system is Ser629. Cys648 and Cys761 form a disulfide bridge. Residue Asn684 is glycosylated (N-linked (GlcNAc...) asparagine). Residues Asp707 and His739 each act as charge relay system in the active site.

This sequence belongs to the peptidase S9B family. DPPIV subfamily. As to quaternary structure, monomer. Homodimer. Heterodimer with Seprase (FAP). Requires homodimerization for optimal dipeptidyl peptidase activity and T-cell costimulation. Found in a membrane raft complex, at least composed of BCL10, CARD11, DPP4 and IKBKB. Associates with collagen. Interacts with PTPRC; the interaction is enhanced in an interleukin-12-dependent manner in activated lymphocytes. Interacts (extracellular domain) with ADA; does not inhibit its dipeptidyl peptidase activity. Interacts with CAV1 (via the N-terminus); the interaction is direct. Interacts (via cytoplasmic tail) with CARD11 (via PDZ domain); its homodimerization is necessary for interaction with CARD11. Interacts with IGF2R; the interaction is direct. Interacts with GPC3. Post-translationally, the soluble form (Dipeptidyl peptidase 4 soluble form also named SDPP) derives from the membrane form (Dipeptidyl peptidase 4 membrane form also named MDPP) by proteolytic processing. In terms of processing, N- and O-Glycosylated. Phosphorylated. Mannose 6-phosphate residues in the carbohydrate moiety are necessary for interaction with IGF2R in activated T-cells. Mannose 6-phosphorylation is induced during T-cell activation.

It localises to the secreted. It is found in the cell membrane. The protein localises to the apical cell membrane. Its subcellular location is the cell projection. The protein resides in the invadopodium membrane. It localises to the lamellipodium membrane. It is found in the cell junction. The protein localises to the membrane raft. It catalyses the reaction Release of an N-terminal dipeptide, Xaa-Yaa-|-Zaa-, from a polypeptide, preferentially when Yaa is Pro, provided Zaa is neither Pro nor hydroxyproline.. Its activity is regulated as follows. Inhibited by GPC3 and diprotin A. Its function is as follows. Cell surface glycoprotein receptor involved in the costimulatory signal essential for T-cell receptor (TCR)-mediated T-cell activation. Acts as a positive regulator of T-cell coactivation, by binding at least ADA, CAV1, IGF2R, and PTPRC. Its binding to CAV1 and CARD11 induces T-cell proliferation and NF-kappa-B activation in a T-cell receptor/CD3-dependent manner. Its interaction with ADA also regulates lymphocyte-epithelial cell adhesion. In association with FAP is involved in the pericellular proteolysis of the extracellular matrix (ECM), the migration and invasion of endothelial cells into the ECM. May be involved in the promotion of lymphatic endothelial cells adhesion, migration and tube formation. When overexpressed, enhanced cell proliferation, a process inhibited by GPC3. Also acts as a serine exopeptidase with a dipeptidyl peptidase activity that regulates various physiological processes by cleaving peptides in the circulation, including many chemokines, mitogenic growth factors, neuropeptides and peptide hormones. Removes N-terminal dipeptides sequentially from polypeptides having unsubstituted N-termini provided that the penultimate residue is proline. This Felis catus (Cat) protein is Dipeptidyl peptidase 4 (DPP4).